A 196-amino-acid chain; its full sequence is Beta-crystallin A4 (196 aa).

Position 2 is an N-acetylthreonine (Thr-2). The tract at residues 2 to 11 (TLQCTKSAGH) is N-terminal arm. Beta/gamma crystallin 'Greek key' domains are found at residues 12–51 (WRMV…KVLS) and 52–98 (GAWV…RPVA). Residues 99-104 (CANHRD) are connecting peptide. 2 Beta/gamma crystallin 'Greek key' domains span residues 105-146 (SRLT…HVQS) and 147-195 (GAWV…RRIQ).

It belongs to the beta/gamma-crystallin family. In terms of assembly, homo/heterodimer, or complexes of higher-order. The structure of beta-crystallin oligomers seems to be stabilized through interactions between the N-terminal arms.

Functionally, crystallins are the dominant structural components of the vertebrate eye lens. The protein is Beta-crystallin A4 (Cryba4) of Mus musculus (Mouse).